A 414-amino-acid chain; its full sequence is xyloglucan O-acetyltransferase 2 (414 aa).

Over 1–26 the chain is Cytoplasmic; it reads MKSSSSIFRETSEKKSERWMMMNIGR. The chain crosses the membrane as a helical; Signal-anchor for type II membrane protein span at residues 27-47; that stretch reads FSPFFLSSFCITLFFTGFFVY. Over 48–414 the chain is Lumenal; the sequence is QNPFKSIADQ…FLMAIIRQLR (367 aa). Intrachain disulfides connect Cys70-Cys120, Cys91-Cys156, Cys100-Cys394, and Cys317-Cys390. Asn88 is a glycosylation site (N-linked (GlcNAc...) asparagine). The GDS motif signature appears at 143–145; the sequence is GDS. The active-site Nucleophile is Ser145. Residues Asn205, Asn263, and Asn308 are each glycosylated (N-linked (GlcNAc...) asparagine). Asp389 functions as the Proton donor in the catalytic mechanism. A DXXH motif motif is present at residues 389–392; the sequence is DCVH. The active-site Proton acceptor is the His392.

This sequence belongs to the PC-esterase family. TBL subfamily.

The protein resides in the membrane. Xyloglucan acetyltransferase that catalyzes the acetylation of fucosylated Gal residues on xyloglucan side chains. Predominantly catalyze 6-O-monoacetylation of Gal residues in the Fuc-Gal-Xyl trisaccharide side chains of xyloglucan oligomers. Involved in xyloglucan specific O-acetylation in seeds. This is xyloglucan O-acetyltransferase 2 from Arabidopsis thaliana (Mouse-ear cress).